The chain runs to 155 residues: Small ribosomal subunit protein uS7cz/uS7cy (155 aa).

Belongs to the universal ribosomal protein uS7 family. In terms of assembly, part of the 30S ribosomal subunit.

It localises to the plastid. Its subcellular location is the chloroplast. Functionally, one of the primary rRNA binding proteins, it binds directly to 16S rRNA where it nucleates assembly of the head domain of the 30S subunit. The polypeptide is Small ribosomal subunit protein uS7cz/uS7cy (rps7-A) (Lactuca sativa (Garden lettuce)).